The following is an 866-amino-acid chain: Leucine--tRNA ligase (866 aa).

The 'HIGH' region motif lies at 42-52 (PYPSGKLHMGH). The short motif at 624-628 (TMSKS) is the 'KMSKS' region element. Lysine 627 is a binding site for ATP.

It belongs to the class-I aminoacyl-tRNA synthetase family.

It localises to the cytoplasm. The enzyme catalyses tRNA(Leu) + L-leucine + ATP = L-leucyl-tRNA(Leu) + AMP + diphosphate. This is Leucine--tRNA ligase from Nitrosospira multiformis (strain ATCC 25196 / NCIMB 11849 / C 71).